The sequence spans 796 residues: Inactive dipeptidyl peptidase 10 (796 aa).

At Met-1–Gly-34 the chain is on the cytoplasmic side. Residues Met-1 to Leu-56 form a mediates effects on KCND2 region. The chain crosses the membrane as a helical; Signal-anchor for type II membrane protein span at residues Ile-35 to Leu-55. At Leu-56–Glu-796 the chain is on the extracellular side. Asn-90, Asn-111, and Asn-119 each carry an N-linked (GlcNAc...) asparagine glycan. Phosphotyrosine is present on residues Tyr-138 and Tyr-143. N-linked (GlcNAc...) asparagine glycosylation is found at Asn-257, Asn-342, and Asn-748.

It belongs to the peptidase S9B family. DPPIV subfamily. As to quaternary structure, may form oligomers. Interacts with KCND1. Interacts with KCND2. N-glycosylation is important for cell surface expression, specially at Asn-257, which is crucial. Found in serum, T-cells and brain (at protein level). Expressed in brain, pancreas, spinal cord and adrenal glands.

The protein resides in the cell membrane. Its function is as follows. Promotes cell surface expression of the potassium channel KCND2. Modulates the activity and gating characteristics of the potassium channel KCND2. Has no dipeptidyl aminopeptidase activity. The protein is Inactive dipeptidyl peptidase 10 (DPP10) of Homo sapiens (Human).